We begin with the raw amino-acid sequence, 495 residues long: MVSEITHKSYPLHFVLFPFMAQGHMIPMVDIARLLAQRGVKITIVTTPHNAARFENVLSRAIESGLPISIVQVKLPSQEAGLPEGNETFDSLVSMELLVPFFKAVNMLEEPVQKLFEEMSPQPSCIISDFCLPYTSKIAKKFNIPKILFHGMCCFCLLCMHVLRKNREILENLKSDKEHFVVPYFPDRVEFTRPQVPMATYVPGEWHEIKEDIVEADKTSYGVIVNTYQELEPAYANDYKEARSGKAWTIGPVSLCNKVGADKAERGNKADIDQDECLKWLDSKEEGSVLYVCLGSICSLPLSQLKELGLGLEESQRPFIWVVRGWEKNKELLEWFSDSGFEERVKDRGLLIKGWSPQMLILAHHSVGGFLTHCGWNSTLEGITSGIPLLTWPLFGDQFCNQKLVVQVLKVGVSAGVEEVTNWGEEEKIGVLVDKEGVKKAVEELMGESDDAKERRKRVKELGQLAQKAVEEGGSSHSNITSLLEDIMQLAQSNN.

Catalysis depends on His-24, which acts as the Proton acceptor. His-24 is an an anthocyanidin binding site. The Charge relay role is filled by Asp-129. UDP-alpha-D-glucose-binding residues include Gln-358, His-373, Trp-376, Asn-377, Ser-378, and Glu-381. An an anthocyanidin-binding site is contributed by Gly-396. The UDP-alpha-D-glucose site is built by Asp-397 and Gln-398.

Belongs to the UDP-glycosyltransferase family.

It carries out the reaction oleanolate + UDP-alpha-D-glucose = oleanolate 3-O-beta-D-glucoside + UDP + H(+). Its function is as follows. Catalyzes the transfer of a glucose (Glc) moiety from UDP-Glc to the C-3 position of the oleanane sapogenins oleanolate and hederagenin. The monoglucosylated hederagenin 3-O-beta-D-glucoside is a feeding deterrent of the yellow-striped flea beetle (Phyllotreta nemorum). The sequence is that of UDP-glycosyltransferase 1 from Barbarea vulgaris (Yellow rocket).